The primary structure comprises 962 residues: Splicing regulator ARVCF (962 aa).

A coiled-coil region spans residues 11–46 (SILASVKEQEARFERLTRALEQERRHVALQLERAQQ). The interval 95–123 (VTVEEDPGTPTSHVSIVTSEDGTTRRTET) is disordered. Phosphothreonine occurs at positions 103 and 105. Positions 103-115 (TPTSHVSIVTSED) are enriched in polar residues. An Omega-N-methylarginine modification is found at arginine 171. Disordered stretches follow at residues 233-255 (GRREAFPMGSESGPPSGRSLPEH), 268-291 (RSLAADDEGGPDLEPDYSTATRRR), and 322-357 (AATAPLAQPERGSLGSLDRVVRRSPSVDSTRKEPRW). Serine 269 is subject to Phosphoserine. The segment covering 272–282 (ADDEGGPDLEP) has biased composition (acidic residues). Residues serine 334, serine 337, serine 345, and serine 347 each carry the phosphoserine modification. ARM repeat units lie at residues 350–389 (STRKEPRWRDPELPEVLAMLRHPVDPVKANAAAYLQHLCF), 392–431 (EGIKRRVRQLRGLPLLVALLDHPRAEVRRRACGALRNLSY), 435–469 (TDNKAAIRDCGGVPALVRLLRAARDNEVRELVTGT), 470–510 (LWNL…NEDS), 528–567 (LRNVSSDGAEARRRLRECEGLVDALLHALQSAVGRKDTDN), and 577–623 (MRNL…GKKA). The disordered stretch occupies residues 593 to 618 (RYQEAEPGIPGSTTSQRRRKDDASCF). Serine 607 carries the phosphoserine modification. Residues 608 to 624 (QRRRKDDASCFGGKKAK) carry the Nuclear localization signal motif. Threonine 643 carries the post-translational modification Phosphothreonine. ARM repeat units lie at residues 647 to 687 (PKRT…AAGA), 700 to 739 (TYIRATVRKERGLPVLVELLQSETDKVVRAVAIALRNLSL), 740 to 782 (DQRN…AVLN), and 783 to 827 (TIHE…SHVL). The interval 777 to 962 (VVAVLNTIHE…TKPQPVDSWV (186 aa)) is required for interaction with RNA-binding proteins DDX5, HNRNPH2 and SRSF1 and with mRNAs. Positions 844–962 (GWTKSRFQSA…TKPQPVDSWV (119 aa)) are disordered. Residues serine 864 and serine 871 each carry the phosphoserine modification. Threonine 872 carries the post-translational modification Phosphothreonine. Basic and acidic residues-rich tracts occupy residues 878 to 887 (KSLDGEKSNT) and 920 to 932 (TSEKELLRPDPGR).

This sequence belongs to the beta-catenin family. Component of a ribonucleoprotein complex containing mRNAs and RNA-binding proteins including DDX5, HNRNPH2 and SRSF1 as well as ARVCF. Interacts (via the extreme C-terminus) with FRMPD2 (via the PDZ 2 domain). Interacts with CCDC85B.

It is found in the cell junction. It localises to the adherens junction. The protein localises to the nucleus. The protein resides in the cytoplasm. Contributes to the regulation of alternative splicing of pre-mRNAs. The protein is Splicing regulator ARVCF (Arvcf) of Mus musculus (Mouse).